Reading from the N-terminus, the 301-residue chain is Probable 2-dehydro-3-deoxy-D-pentonate aldolase YjhH (301 aa).

Catalysis depends on charge relay system residues Thr46 and Tyr109. The active-site Proton donor is the Tyr135. Lys164 acts as the Schiff-base intermediate with substrate in catalysis.

The protein belongs to the DapA family.

It is found in the cytoplasm. The enzyme catalyses 2-dehydro-3-deoxy-D-arabinonate = glycolaldehyde + pyruvate. In terms of biological role, functions as a 2-dehydro-3-deoxy-D-pentonate aldolase. This Escherichia coli (strain K12) protein is Probable 2-dehydro-3-deoxy-D-pentonate aldolase YjhH (yjhH).